A 286-amino-acid polypeptide reads, in one-letter code: uncharacterized protein (286 aa).

Positions 1 to 58 (MLLEGIETLLVLSKEKTMSRTGSQLYISQSAVSKRIANLEKKLGKKLIVPAGRHIKLT) constitute an HTH lysR-type domain. Residues 18-37 (MSRTGSQLYISQSAVSKRIA) constitute a DNA-binding region (H-T-H motif).

The protein belongs to the LysR transcriptional regulatory family.

This is an uncharacterized protein from Vibrio cholerae serotype O1 (strain ATCC 39315 / El Tor Inaba N16961).